Reading from the N-terminus, the 166-residue chain is Endoribonuclease YbeY (166 aa).

Positions 126, 130, and 136 each coordinate Zn(2+).

It belongs to the endoribonuclease YbeY family. Zn(2+) serves as cofactor.

The protein localises to the cytoplasm. Its function is as follows. Single strand-specific metallo-endoribonuclease involved in late-stage 70S ribosome quality control and in maturation of the 3' terminus of the 16S rRNA. The sequence is that of Endoribonuclease YbeY from Laribacter hongkongensis (strain HLHK9).